Reading from the N-terminus, the 205-residue chain is Probable NAD(P)H dehydrogenase (quinone) FQR1-like 1 (205 aa).

One can recognise a Flavodoxin-like domain in the interval 5-192 (VYIVYYSMYG…GQAFHQGKYI (188 aa)). FMN-binding positions include 11-15 (SMYGH), 112-165 (IFYS…SPYG), and His-136. Tyr-13 is an NAD(+) binding site.

The protein belongs to the WrbA family. FMN serves as cofactor.

The protein resides in the cell membrane. The catalysed reaction is a quinone + NADH + H(+) = a quinol + NAD(+). The enzyme catalyses a quinone + NADPH + H(+) = a quinol + NADP(+). Catalyzes the transfer of electrons from NADH and NADPH to reduce quinone to the hydroquinone state. The chain is Probable NAD(P)H dehydrogenase (quinone) FQR1-like 1 from Arabidopsis thaliana (Mouse-ear cress).